The following is a 530-amino-acid chain: Laccase-2 (530 aa).

An N-terminal signal peptide occupies residues 1 to 23; it reads MLLSSAFVGSCLAILNFAAAVSA. 2 consecutive Plastocyanin-like domains span residues 36-154 and 167-311; these read NKVI…YDPE and TTII…RYTN. A glycan (N-linked (GlcNAc...) asparagine) is linked at asparagine 82. The Cu cation site is built by histidine 88 and histidine 90. 2 disulfide bridges follow: cysteine 109–cysteine 520 and cysteine 141–cysteine 228. Residue asparagine 120 is glycosylated (N-linked (GlcNAc...) asparagine). Histidine 133 and histidine 135 together coordinate Cu cation. Asparagine 191, asparagine 240, asparagine 292, asparagine 311, asparagine 366, asparagine 375, asparagine 392, and asparagine 412 each carry an N-linked (GlcNAc...) asparagine glycan. Residues 379–504 form the Plastocyanin-like 3 domain; sequence YVNPTVPVLL…FAVVLAEAPQ (126 aa). Positions 428, 431, 433, 484, 485, 486, and 490 each coordinate Cu cation.

Belongs to the multicopper oxidase family. The cofactor is Cu cation.

The protein localises to the secreted. The catalysed reaction is 4 hydroquinone + O2 = 4 benzosemiquinone + 2 H2O. Inhibited by chloride ions. Inhibited by citrate. Inhibited by oxalate. Activated by acetate. Its function is as follows. In vitro, has activity towards 2,2'-azino-bis(3-ethylbenzthiazoline-6-sulfonic acid) (ABTS), 2,6-dimethoxy-phenol, and guaiacol. Although brown rot fungi preferentially degrade hemicellulose and cellulose, the enzyme may contribute to generating small amounts of lignin breakdown products required for catalytic reactions. The polypeptide is Laccase-2 (Fomitopsis schrenkii (Brown rot fungus)).